A 599-amino-acid chain; its full sequence is NADH-quinone oxidoreductase subunit C/D (599 aa).

Positions 1–189 (MTDLTTHDLA…DPFELTKQKE (189 aa)) are NADH dehydrogenase I subunit C. The interval 213–599 (DFMFLNLGPN…IDFVMSDVDR (387 aa)) is NADH dehydrogenase I subunit D.

In the N-terminal section; belongs to the complex I 30 kDa subunit family. This sequence in the C-terminal section; belongs to the complex I 49 kDa subunit family. In terms of assembly, NDH-1 is composed of 13 different subunits. Subunits NuoB, CD, E, F, and G constitute the peripheral sector of the complex.

Its subcellular location is the cell inner membrane. It catalyses the reaction a quinone + NADH + 5 H(+)(in) = a quinol + NAD(+) + 4 H(+)(out). Functionally, NDH-1 shuttles electrons from NADH, via FMN and iron-sulfur (Fe-S) centers, to quinones in the respiratory chain. The immediate electron acceptor for the enzyme in this species is believed to be ubiquinone. Couples the redox reaction to proton translocation (for every two electrons transferred, four hydrogen ions are translocated across the cytoplasmic membrane), and thus conserves the redox energy in a proton gradient. This Pectobacterium atrosepticum (strain SCRI 1043 / ATCC BAA-672) (Erwinia carotovora subsp. atroseptica) protein is NADH-quinone oxidoreductase subunit C/D.